The chain runs to 238 residues: Fatty acid metabolism regulator protein (238 aa).

The 69-residue stretch at 6–74 folds into the HTH gntR-type domain; sequence QSPAGFAEEY…HGKPTKVNNF (69 aa). The H-T-H motif DNA-binding region spans 34–53; that stretch reads ERELSELIGVTRTTLREVLQ.

As to quaternary structure, homodimer.

The protein localises to the cytoplasm. Multifunctional regulator of fatty acid metabolism. The protein is Fatty acid metabolism regulator protein of Erwinia tasmaniensis (strain DSM 17950 / CFBP 7177 / CIP 109463 / NCPPB 4357 / Et1/99).